The chain runs to 618 residues: ELMO domain-containing protein C (618 aa).

A coiled-coil region spans residues 1-72 (MERYRIRRER…EELRLQGDRF (72 aa)). Disordered stretches follow at residues 153-175 (NFDNNNNNNNNSNNNNNGNKPSL) and 245-276 (TTTTTTTTTTTTTTTTTTTTTTTTTPTSSTTV). Low complexity-rich tracts occupy residues 156 to 171 (NNNNNNNNSNNNNNGN) and 245 to 275 (TTTTTTTTTTTTTTTTTTTTTTTTTPTSSTT). Positions 382–545 (DHEEYLKHLW…KLKSQLNEIS (164 aa)) constitute an ELMO domain. Composition is skewed to low complexity over residues 574-592 (QQQQQLQQQQQSLPLPSSP) and 602-618 (TTTSSTSISPSKNTQNN). Positions 574-618 (QQQQQLQQQQQSLPLPSSPRSFLNNYQQTTTSSTSISPSKNTQNN) are disordered.

This is ELMO domain-containing protein C (elmoC) from Dictyostelium discoideum (Social amoeba).